A 122-amino-acid chain; its full sequence is Large ribosomal subunit protein uL14 (122 aa).

The protein belongs to the universal ribosomal protein uL14 family. As to quaternary structure, part of the 50S ribosomal subunit. Forms a cluster with proteins L3 and L19. In the 70S ribosome, L14 and L19 interact and together make contacts with the 16S rRNA in bridges B5 and B8.

Binds to 23S rRNA. Forms part of two intersubunit bridges in the 70S ribosome. This chain is Large ribosomal subunit protein uL14, found in Herpetosiphon aurantiacus (strain ATCC 23779 / DSM 785 / 114-95).